The primary structure comprises 438 residues: Forkhead box protein J1 (438 aa).

The segment at residues 123–217 (KPPYSYATLI…MNGAMKKRRL (95 aa)) is a DNA-binding region (fork-head).

This sequence belongs to the FOXJ1 family.

It is found in the nucleus. Functionally, key transcription factor required for motile ciliogenesis. Activates genes essential for motile cilia formation and function. The protein is Forkhead box protein J1 of Xenopus tropicalis (Western clawed frog).